The sequence spans 391 residues: Probable chaperonin-like protein PrmG (391 aa).

A disordered region spans residues 153–191 (TTRWSVRSSPPPSNTSARTASSPPRRATHSGCRSRSSTA). Positions 154-174 (TRWSVRSSPPPSNTSARTASS) are enriched in polar residues.

This sequence belongs to the chaperonin (HSP60) family.

Functionally, probably plays an essential role in the productive folding of PrmA and PrmC, and thus in the formation of the active PrmABCD complex. This Gordonia sp. (strain TY-5) protein is Probable chaperonin-like protein PrmG.